The chain runs to 604 residues: Aspartate--tRNA(Asp/Asn) ligase (604 aa).

Glu168 is a binding site for L-aspartate. The tract at residues 192 to 195 (QLFK) is aspartate. Arg214 is a binding site for L-aspartate. ATP-binding positions include 214 to 216 (RDE) and Gln223. His446 is a binding site for L-aspartate. Glu480 contacts ATP. Residue Arg487 participates in L-aspartate binding. 532–535 (GWDR) provides a ligand contact to ATP. The tract at residues 575–604 (LEAGVDARPKPEARAQAGTAGPAAPVADPT) is disordered. Residues 577 to 587 (AGVDARPKPEA) show a composition bias toward basic and acidic residues. Positions 588–604 (RAQAGTAGPAAPVADPT) are enriched in low complexity.

Belongs to the class-II aminoacyl-tRNA synthetase family. Type 1 subfamily. As to quaternary structure, homodimer.

The protein resides in the cytoplasm. The enzyme catalyses tRNA(Asx) + L-aspartate + ATP = L-aspartyl-tRNA(Asx) + AMP + diphosphate. In terms of biological role, aspartyl-tRNA synthetase with relaxed tRNA specificity since it is able to aspartylate not only its cognate tRNA(Asp) but also tRNA(Asn). Reaction proceeds in two steps: L-aspartate is first activated by ATP to form Asp-AMP and then transferred to the acceptor end of tRNA(Asp/Asn). This chain is Aspartate--tRNA(Asp/Asn) ligase, found in Salinispora arenicola (strain CNS-205).